Reading from the N-terminus, the 261-residue chain is Cytochrome c oxidase subunit 3 (261 aa).

Residues 1 to 15 (MTHQTHAYHTVNPSP) are Mitochondrial matrix-facing. Residues 16–34 (WPLTGALSALLMTSGLIMW) traverse the membrane as a helical segment. Topologically, residues 35 to 40 (FHFNSP) are mitochondrial intermembrane. A helical membrane pass occupies residues 41–66 (LLLVLGLTTNFLTMYQWWRDIIREST). The Mitochondrial matrix portion of the chain corresponds to 67–72 (FQGHHT). A helical transmembrane segment spans residues 73 to 105 (TIVQKGLRYGMILFIVSEVFFFAGFFWAFYHSS). The Mitochondrial intermembrane segment spans residues 106 to 128 (LAPTPELGGCWPPTGINPLNPLE). The chain crosses the membrane as a helical span at residues 129-152 (VPLLNTSVLLASGVSITWAHHSLM). The Mitochondrial matrix portion of the chain corresponds to 153–155 (EGH). A helical membrane pass occupies residues 156 to 183 (RKHMLQALFITIALGVYFTLLQASEYYE). Over 184 to 190 (APFTISD) the chain is Mitochondrial intermembrane. A helical transmembrane segment spans residues 191-223 (GIYGSTFFVATGFHGLHVIIGSSFLIVCFMRQL). At 224–232 (KFHFTSSHH) the chain is on the mitochondrial matrix side. A helical transmembrane segment spans residues 233–256 (FGFEAAAWYWHFVDVVWLFLYVSI). At 257–261 (YWWGS) the chain is on the mitochondrial intermembrane side.

Belongs to the cytochrome c oxidase subunit 3 family. As to quaternary structure, component of the cytochrome c oxidase (complex IV, CIV), a multisubunit enzyme composed of 14 subunits. The complex is composed of a catalytic core of 3 subunits MT-CO1, MT-CO2 and MT-CO3, encoded in the mitochondrial DNA, and 11 supernumerary subunits COX4I, COX5A, COX5B, COX6A, COX6B, COX6C, COX7A, COX7B, COX7C, COX8 and NDUFA4, which are encoded in the nuclear genome. The complex exists as a monomer or a dimer and forms supercomplexes (SCs) in the inner mitochondrial membrane with NADH-ubiquinone oxidoreductase (complex I, CI) and ubiquinol-cytochrome c oxidoreductase (cytochrome b-c1 complex, complex III, CIII), resulting in different assemblies (supercomplex SCI(1)III(2)IV(1) and megacomplex MCI(2)III(2)IV(2)).

It is found in the mitochondrion inner membrane. The enzyme catalyses 4 Fe(II)-[cytochrome c] + O2 + 8 H(+)(in) = 4 Fe(III)-[cytochrome c] + 2 H2O + 4 H(+)(out). In terms of biological role, component of the cytochrome c oxidase, the last enzyme in the mitochondrial electron transport chain which drives oxidative phosphorylation. The respiratory chain contains 3 multisubunit complexes succinate dehydrogenase (complex II, CII), ubiquinol-cytochrome c oxidoreductase (cytochrome b-c1 complex, complex III, CIII) and cytochrome c oxidase (complex IV, CIV), that cooperate to transfer electrons derived from NADH and succinate to molecular oxygen, creating an electrochemical gradient over the inner membrane that drives transmembrane transport and the ATP synthase. Cytochrome c oxidase is the component of the respiratory chain that catalyzes the reduction of oxygen to water. Electrons originating from reduced cytochrome c in the intermembrane space (IMS) are transferred via the dinuclear copper A center (CU(A)) of subunit 2 and heme A of subunit 1 to the active site in subunit 1, a binuclear center (BNC) formed by heme A3 and copper B (CU(B)). The BNC reduces molecular oxygen to 2 water molecules using 4 electrons from cytochrome c in the IMS and 4 protons from the mitochondrial matrix. The protein is Cytochrome c oxidase subunit 3 (MT-CO3) of Dasypus novemcinctus (Nine-banded armadillo).